The primary structure comprises 671 residues: DNA ligase (671 aa).

NAD(+) is bound by residues 34–38 (DSEYD), 83–84 (SL), and Glu-113. Lys-115 acts as the N6-AMP-lysine intermediate in catalysis. The NAD(+) site is built by Arg-136, Glu-170, Lys-286, and Lys-310. 4 residues coordinate Zn(2+): Cys-404, Cys-407, Cys-422, and Cys-427. A BRCT domain is found at 590-671 (EEAGVFAGKT…FTQAVEQSEQ (82 aa)).

Belongs to the NAD-dependent DNA ligase family. LigA subfamily. It depends on Mg(2+) as a cofactor. Mn(2+) is required as a cofactor.

It carries out the reaction NAD(+) + (deoxyribonucleotide)n-3'-hydroxyl + 5'-phospho-(deoxyribonucleotide)m = (deoxyribonucleotide)n+m + AMP + beta-nicotinamide D-nucleotide.. Its function is as follows. DNA ligase that catalyzes the formation of phosphodiester linkages between 5'-phosphoryl and 3'-hydroxyl groups in double-stranded DNA using NAD as a coenzyme and as the energy source for the reaction. It is essential for DNA replication and repair of damaged DNA. The sequence is that of DNA ligase from Shouchella clausii (strain KSM-K16) (Alkalihalobacillus clausii).